We begin with the raw amino-acid sequence, 416 residues long: Gamma-glutamyl phosphate reductase (416 aa).

Belongs to the gamma-glutamyl phosphate reductase family.

It localises to the cytoplasm. The catalysed reaction is L-glutamate 5-semialdehyde + phosphate + NADP(+) = L-glutamyl 5-phosphate + NADPH + H(+). The protein operates within amino-acid biosynthesis; L-proline biosynthesis; L-glutamate 5-semialdehyde from L-glutamate: step 2/2. Its function is as follows. Catalyzes the NADPH-dependent reduction of L-glutamate 5-phosphate into L-glutamate 5-semialdehyde and phosphate. The product spontaneously undergoes cyclization to form 1-pyrroline-5-carboxylate. The polypeptide is Gamma-glutamyl phosphate reductase (Vibrio atlanticus (strain LGP32) (Vibrio splendidus (strain Mel32))).